Here is a 779-residue protein sequence, read N- to C-terminus: Subtilisin-like protease SBT3.18 (779 aa).

Positions 1 to 21 (MYFWVMFFTLMIKVKLYITNG) are cleaved as a signal peptide. Positions 22–109 (DIFQNRPTVY…VFKSKSLKLH (88 aa)) are cleaved as a propeptide — activation peptide. The 80-residue stretch at 30-109 (VYVVYLGANR…VFKSKSLKLH (80 aa)) folds into the Inhibitor I9 domain. Asparagine 84 is a glycosylation site (N-linked (GlcNAc...) asparagine). In terms of domain architecture, Peptidase S8 spans 113-621 (SWDFLGLAVD…AGHINPLKAM (509 aa)). Active-site charge relay system residues include aspartate 144 and histidine 221. Asparagine 236 and asparagine 406 each carry an N-linked (GlcNAc...) asparagine glycan. Catalysis depends on serine 553, which acts as the Charge relay system.

Belongs to the peptidase S8 family.

It is found in the secreted. This Arabidopsis thaliana (Mouse-ear cress) protein is Subtilisin-like protease SBT3.18.